Here is a 341-residue protein sequence, read N- to C-terminus: Glyceraldehyde-3-phosphate dehydrogenase (341 aa).

Residues 11 to 12 (TI) and G110 contribute to the NAD(+) site. Residue 139-141 (SCN) participates in D-glyceraldehyde 3-phosphate binding. Catalysis depends on C140, which acts as the Nucleophile. R168 is a binding site for NAD(+). Residue 194-195 (HG) coordinates D-glyceraldehyde 3-phosphate. Residue Q302 coordinates NAD(+).

The protein belongs to the glyceraldehyde-3-phosphate dehydrogenase family. As to quaternary structure, homotetramer.

The protein resides in the cytoplasm. It catalyses the reaction D-glyceraldehyde 3-phosphate + phosphate + NADP(+) = (2R)-3-phospho-glyceroyl phosphate + NADPH + H(+). The catalysed reaction is D-glyceraldehyde 3-phosphate + phosphate + NAD(+) = (2R)-3-phospho-glyceroyl phosphate + NADH + H(+). It functions in the pathway carbohydrate degradation; glycolysis; pyruvate from D-glyceraldehyde 3-phosphate: step 1/5. This is Glyceraldehyde-3-phosphate dehydrogenase from Methanoculleus marisnigri (strain ATCC 35101 / DSM 1498 / JR1).